Here is a 101-residue protein sequence, read N- to C-terminus: HssA/B-like protein 40 (101 aa).

Residues 1 to 26 (MTLFSSISSMSTSMSGSKSSISSFGS) form a disordered region.

The protein belongs to the hssA/B family.

In Dictyostelium discoideum (Social amoeba), this protein is HssA/B-like protein 40 (hssl40).